A 316-amino-acid polypeptide reads, in one-letter code: Biotin synthase (316 aa).

The 229-residue stretch at 38–266 (YKGKKIELCA…DKDIRVCGGR (229 aa)) folds into the Radical SAM core domain. Cys-56, Cys-60, and Cys-63 together coordinate [4Fe-4S] cluster. 4 residues coordinate [2Fe-2S] cluster: Ser-100, Cys-131, Cys-191, and Arg-261.

Belongs to the radical SAM superfamily. Biotin synthase family. As to quaternary structure, homodimer. [4Fe-4S] cluster serves as cofactor. Requires [2Fe-2S] cluster as cofactor.

The catalysed reaction is (4R,5S)-dethiobiotin + (sulfur carrier)-SH + 2 reduced [2Fe-2S]-[ferredoxin] + 2 S-adenosyl-L-methionine = (sulfur carrier)-H + biotin + 2 5'-deoxyadenosine + 2 L-methionine + 2 oxidized [2Fe-2S]-[ferredoxin]. The protein operates within cofactor biosynthesis; biotin biosynthesis; biotin from 7,8-diaminononanoate: step 2/2. Catalyzes the conversion of dethiobiotin (DTB) to biotin by the insertion of a sulfur atom into dethiobiotin via a radical-based mechanism. The sequence is that of Biotin synthase from Thermodesulfovibrio yellowstonii (strain ATCC 51303 / DSM 11347 / YP87).